The following is a 354-amino-acid chain: Methionine import ATP-binding protein MetN (354 aa).

The ABC transporter domain maps to Leu8–Ile250. ATP is bound at residue Gly42–Ser49.

The protein belongs to the ABC transporter superfamily. Methionine importer (TC 3.A.1.24) family. The complex is composed of two ATP-binding proteins (MetN), two transmembrane proteins (MetI) and a solute-binding protein (MetQ).

The protein localises to the cell membrane. It carries out the reaction L-methionine(out) + ATP + H2O = L-methionine(in) + ADP + phosphate + H(+). The catalysed reaction is D-methionine(out) + ATP + H2O = D-methionine(in) + ADP + phosphate + H(+). Part of the ABC transporter complex MetNIQ involved in methionine import. Responsible for energy coupling to the transport system. This is Methionine import ATP-binding protein MetN from Streptococcus pyogenes serotype M18 (strain MGAS8232).